The primary structure comprises 853 residues: Neural cell adhesion molecule 1 (853 aa).

Positions 1–19 are cleaved as a signal peptide; it reads MLQTKNLIWTLFFLGTAVS. 5 Ig-like C2-type domains span residues 20 to 111, 116 to 205, 212 to 300, 307 to 412, and 415 to 500; these read LQVD…ATVN, QKLM…KDIQ, PTVQ…ASIH, PKIT…LEVQ, and PKLQ…ESLE. The Extracellular segment spans residues 20-719; the sequence is LQVDIVPSQG…NGSPTSGLST (700 aa). Disulfide bonds link Cys-41-Cys-96 and Cys-139-Cys-189. Heparin is bound by residues 152-156 and 161-165; these read KHKGR and KKDVR. The N-linked (GlcNAc...) asparagine glycan is linked to Asn-222. An intrachain disulfide couples Cys-235 to Cys-286. 5 N-linked (GlcNAc...) asparagine glycosylation sites follow: Asn-314, Asn-346, Asn-432, Asn-458, and Asn-487. An intrachain disulfide couples Cys-328 to Cys-394. Cysteines 435 and 488 form a disulfide. Fibronectin type-III domains follow at residues 508 to 607 and 609 to 704; these read TPSS…TQPV and EPSA…SAQP. A helical transmembrane segment spans residues 720–737; that stretch reads GAIVGILVVTFVLLLVAV. Residues 738 to 853 lie on the Cytoplasmic side of the membrane; the sequence is DVTCYFLNKC…TQIKVNESKA (116 aa). The interval 764 to 853 is disordered; that stretch reads GAKGKDMEEG…TQIKVNESKA (90 aa). 2 stretches are compositionally biased toward basic and acidic residues: residues 766–807 and 815–829; these read KGKD…HTEP and EPEK…ETET. Phosphoserine occurs at positions 778 and 782. A compositionally biased stretch (polar residues) spans 838–853; it reads TVPNDATQIKVNESKA.

As to quaternary structure, interacts with MDK. Found in a complex with SLC39A6, SLC39A10 and with NCAM1; this complex controls NCAM1 phosphorylation and integration into focal adhesion complexes during epithelial-tomesenchymal transition. Interacts with synaptic plasticity regulator PANTS. Post-translationally, polysialylated by ST8SIA2 and ST8SIA4. Polysialylation modulates cell interactions by confering both attractive and repulsive properties that are highly regulated by ST8SIA2 and ST8SIA4. Polysialylation is formed on a-2,3-linked sialic acid of core glycans.

It is found in the cell membrane. In terms of biological role, this protein is a cell adhesion molecule involved in neuron-neuron adhesion, neurite fasciculation, outgrowth of neurites, etc. In Bos taurus (Bovine), this protein is Neural cell adhesion molecule 1.